We begin with the raw amino-acid sequence, 78 residues long: Probable [Fe-S]-dependent transcriptional repressor (78 aa).

Iron-sulfur cluster is bound by residues Cys-56, Cys-61, Cys-64, and Cys-70.

The protein belongs to the FeoC family.

Its function is as follows. May function as a transcriptional regulator that controls feoABC expression. This Salmonella agona (strain SL483) protein is Probable [Fe-S]-dependent transcriptional repressor.